Here is a 333-residue protein sequence, read N- to C-terminus: Mitochondrial fission regulator 1 (333 aa).

Residues 1 to 48 (MLGWIKRLIRMVFQQVGVSMQSVLWSRKPYGSSRSIVRKIGTNLSLIQ) constitute a mitochondrion transit peptide. Serine 119 bears the Phosphoserine mark. A coiled-coil region spans residues 137 to 169 (NEEALQKICALENELAALRAQIAKIVTQQEQQN). Disordered regions lie at residues 177 to 198 (STTF…PPPA) and 288 to 315 (SDSQ…FGPH). A necessary and sufficient to promote mitochondrial fission region spans residues 179-304 (TFGTIPPHPP…EKGIPKSESE (126 aa)). The segment covering 184–198 (PPHPPPPPPPLPPPA) has biased composition (pro residues). Residues 288–307 (SDSQDEVEKGIPKSESEATS) are compositionally biased toward basic and acidic residues.

This sequence belongs to the MTFR1 family.

The protein resides in the mitochondrion. May play a role in mitochondrial aerobic respiration. May also regulate mitochondrial organization and fission. This is Mitochondrial fission regulator 1 (MTFR1) from Homo sapiens (Human).